The sequence spans 802 residues: Vacuolar membrane protease (802 aa).

The Cytoplasmic segment spans residues 1–13; it reads MARYNPLAFTSGP. Residues 14 to 34 traverse the membrane as a helical segment; sequence VVFFITITYTALLIALLLTHL. The Vacuolar segment spans residues 35–357; it reads TLPSYPSHPP…KVFIVFQLHT (323 aa). Residues Asn48, Asn102, Asn105, and Asn112 are each glycosylated (N-linked (GlcNAc...) asparagine). His152 and Asp164 together coordinate Zn(2+). The Proton acceptor role is filled by Glu198. Zn(2+) is bound by residues Glu199, Glu224, and His297. Residues 358-378 traverse the membrane as a helical segment; that stretch reads FFALCVTLLVVAPLTLIGLAW. Residues 379 to 389 lie on the Cytoplasmic side of the membrane; sequence SLHKADRNYLF. The helical transmembrane segment at 390-409 threads the bilayer; sequence ARKAFVYSADDDEPIHLYGW. Residues 410–423 lie on the Vacuolar side of the membrane; the sequence is RGFFRFPIAFGIAT. A helical membrane pass occupies residues 424–444; the sequence is SIVVGLAMMLSAWFAVSWFLL. The Cytoplasmic portion of the chain corresponds to 445-457; sequence HGADAMRPSALQR. A helical membrane pass occupies residues 458–478; that stretch reads MYSLLWLFIGSFCLLVFFTIL. Topologically, residues 479–490 are vacuolar; sequence ANNHQVAAGYPS. The chain crosses the membrane as a helical span at residues 491 to 511; that stretch reads LFCFATVFLANVLSFLELFLA. The Cytoplasmic segment spans residues 512–609; the sequence is PPKSAYAWNV…EQEWSGKLPS (98 aa). 2 disordered regions span residues 528 to 554 and 570 to 603; these read GSRP…ATET and AGRR…EQEW. The helical transmembrane segment at 610-630 threads the bilayer; it reads WIWIVQFSLLAPMIVILVGQI. The Vacuolar portion of the chain corresponds to 631–649; that stretch reads ALLLTSALYQTPSDGNSPL. A helical membrane pass occupies residues 650–670; it reads YIYTSIAALAVFLVAPIGPFI. The Cytoplasmic segment spans residues 671-677; that stretch reads HRFTHHV. A helical membrane pass occupies residues 678–698; the sequence is PTFLFLLCVATTIYNLVAFPF. Over 699–802 the chain is Vacuolar; sequence SEQHKLKVYF…HDDSNNRGRR (104 aa). 2 N-linked (GlcNAc...) asparagine glycosylation sites follow: Asn746 and Asn779.

Belongs to the peptidase M28 family. Zn(2+) serves as cofactor.

Its subcellular location is the vacuole membrane. May be involved in vacuolar sorting and osmoregulation. In Leptosphaeria maculans (strain JN3 / isolate v23.1.3 / race Av1-4-5-6-7-8) (Blackleg fungus), this protein is Vacuolar membrane protease.